Reading from the N-terminus, the 245-residue chain is Orotidine 5'-phosphate decarboxylase (245 aa).

Substrate contacts are provided by residues D22, K44, 71–80 (DLKFHDIPNT), T131, R192, Q201, G221, and R222. The active-site Proton donor is the K73.

The protein belongs to the OMP decarboxylase family. Type 1 subfamily. In terms of assembly, homodimer.

The catalysed reaction is orotidine 5'-phosphate + H(+) = UMP + CO2. It functions in the pathway pyrimidine metabolism; UMP biosynthesis via de novo pathway; UMP from orotate: step 2/2. Its function is as follows. Catalyzes the decarboxylation of orotidine 5'-monophosphate (OMP) to uridine 5'-monophosphate (UMP). This Escherichia coli (strain K12 / MC4100 / BW2952) protein is Orotidine 5'-phosphate decarboxylase.